The chain runs to 873 residues: Coatomer subunit gamma-2 (873 aa).

Residues 1 to 11 show a composition bias toward basic and acidic residues; sequence MIKKFDKKDEE. The tract at residues 1–21 is disordered; sequence MIKKFDKKDEESGSGSNPFQH. HEAT repeat units follow at residues 64 to 101, 283 to 320, 321 to 355, 356 to 392, 395 to 430, and 467 to 504; these read TEAT…ISED, RELA…KHPS, AVTA…GSES, SVDR…KYPR, SVMM…ENPE, and PTPS…QNDD.

It belongs to the COPG family. In terms of assembly, oligomeric complex.

The protein localises to the cytoplasm. The protein resides in the golgi apparatus membrane. Its subcellular location is the cytoplasmic vesicle. It is found in the COPI-coated vesicle membrane. The coatomer is a cytosolic protein complex that binds to dilysine motifs and reversibly associates with Golgi non-clathrin-coated vesicles, which further mediate biosynthetic protein transport from the ER, via the Golgi up to the trans Golgi network. Coatomer complex is required for budding from Golgi membranes, and is essential for the retrograde Golgi-to-ER transport of dilysine-tagged proteins. The chain is Coatomer subunit gamma-2 (copg2) from Danio rerio (Zebrafish).